Consider the following 287-residue polypeptide: Phosphatidylserine decarboxylase proenzyme (287 aa).

Residues aspartate 89, histidine 146, and serine 252 each act as charge relay system; for autoendoproteolytic cleavage activity in the active site. The active-site Schiff-base intermediate with substrate; via pyruvic acid; for decarboxylase activity is the serine 252. Serine 252 is modified (pyruvic acid (Ser); by autocatalysis).

It belongs to the phosphatidylserine decarboxylase family. PSD-B subfamily. Prokaryotic type I sub-subfamily. In terms of assembly, heterodimer of a large membrane-associated beta subunit and a small pyruvoyl-containing alpha subunit. Pyruvate serves as cofactor. Post-translationally, is synthesized initially as an inactive proenzyme. Formation of the active enzyme involves a self-maturation process in which the active site pyruvoyl group is generated from an internal serine residue via an autocatalytic post-translational modification. Two non-identical subunits are generated from the proenzyme in this reaction, and the pyruvate is formed at the N-terminus of the alpha chain, which is derived from the carboxyl end of the proenzyme. The autoendoproteolytic cleavage occurs by a canonical serine protease mechanism, in which the side chain hydroxyl group of the serine supplies its oxygen atom to form the C-terminus of the beta chain, while the remainder of the serine residue undergoes an oxidative deamination to produce ammonia and the pyruvoyl prosthetic group on the alpha chain. During this reaction, the Ser that is part of the protease active site of the proenzyme becomes the pyruvoyl prosthetic group, which constitutes an essential element of the active site of the mature decarboxylase.

It is found in the cell membrane. The catalysed reaction is a 1,2-diacyl-sn-glycero-3-phospho-L-serine + H(+) = a 1,2-diacyl-sn-glycero-3-phosphoethanolamine + CO2. The protein operates within phospholipid metabolism; phosphatidylethanolamine biosynthesis; phosphatidylethanolamine from CDP-diacylglycerol: step 2/2. Catalyzes the formation of phosphatidylethanolamine (PtdEtn) from phosphatidylserine (PtdSer). The sequence is that of Phosphatidylserine decarboxylase proenzyme from Shewanella sediminis (strain HAW-EB3).